We begin with the raw amino-acid sequence, 192 residues long: Interferon (192 aa).

A signal peptide spans 1–30; sequence MAVPASPQHPRGYGILLLTLLMKALAAAAA. Disulfide bonds link C31-C128, C60-C154, and C67-C167. N-linked (GlcNAc...) asparagine glycosylation is found at N70 and N77.

Belongs to the alpha/beta interferon family.

The protein resides in the secreted. Has antiviral activities. The chain is Interferon from Meleagris gallopavo (Wild turkey).